The primary structure comprises 372 residues: MHC class I-like protein MILL2 (372 aa).

The signal sequence occupies residues 1-26 (MEASSGTAGPAVLLLILALLLTESQG). Positions 28 to 119 (RSQGTHTLRY…MINQKGHDKG (92 aa)) are alpha-1. Cystine bridges form between Cys-78-Cys-89, Cys-129-Cys-191, and Cys-230-Cys-287. The alpha-2 stretch occupies residues 120–210 (PYTLQATLDC…SLSNVLPDTG (91 aa)). Asn-134, Asn-234, and Asn-293 each carry an N-linked (GlcNAc...) asparagine glycan. In terms of domain architecture, Ig-like C1-type spans 192–302 (PARLQRHLAS…NRTIMQTAVS (111 aa)). Positions 211 to 339 (SPVVIVTCRN…VVDGGLVTGN (129 aa)) are alpha-3. The tract at residues 308-349 (WPSASWATRQEAEGPHRTHNDHVVDGGLVTGNANKDSPDASS) is disordered. Basic and acidic residues predominate over residues 317–331 (QEAEGPHRTHNDHVV). The tract at residues 340-348 (ANKDSPDAS) is connecting peptide. Residue Ser-349 is the site of GPI-anchor amidated serine attachment. Residues 350–372 (CATASAISAFPVVVLSVALPRAN) constitute a propeptide, removed in mature form.

Belongs to the MHC class I family. In terms of assembly, heterodimer with B2M. As to expression, ubiquitously expressed in neonatal and adult tissues.

The protein resides in the cell membrane. Binds to heparan sulfate proteoglycans on the surface of fibroblast cells. The polypeptide is MHC class I-like protein MILL2 (Rattus norvegicus (Rat)).